A 275-amino-acid chain; its full sequence is NH(3)-dependent NAD(+) synthetase (275 aa).

Position 47–54 (47–54 (GISGGQDS)) interacts with ATP. Aspartate 53 is a binding site for Mg(2+). Residue arginine 141 coordinates deamido-NAD(+). Residue threonine 161 participates in ATP binding. Glutamate 166 is a binding site for Mg(2+). Lysine 174 and aspartate 181 together coordinate deamido-NAD(+). Residues lysine 190 and threonine 212 each contribute to the ATP site. 261–262 (HK) contacts deamido-NAD(+).

This sequence belongs to the NAD synthetase family. As to quaternary structure, homodimer.

The enzyme catalyses deamido-NAD(+) + NH4(+) + ATP = AMP + diphosphate + NAD(+) + H(+). It functions in the pathway cofactor biosynthesis; NAD(+) biosynthesis; NAD(+) from deamido-NAD(+) (ammonia route): step 1/1. Functionally, catalyzes the ATP-dependent amidation of deamido-NAD to form NAD. Uses ammonia as a nitrogen source. The sequence is that of NH(3)-dependent NAD(+) synthetase from Lactiplantibacillus plantarum (strain ATCC BAA-793 / NCIMB 8826 / WCFS1) (Lactobacillus plantarum).